Consider the following 155-residue polypeptide: Small ribosomal subunit protein uS17 (155 aa).

This sequence belongs to the universal ribosomal protein uS17 family. In terms of assembly, component of the small ribosomal subunit. Mature ribosomes consist of a small (40S) and a large (60S) subunit. The 40S subunit contains about 32 different proteins and 1 molecule of RNA (18S). The 60S subunit contains 45 different proteins and 3 molecules of RNA (25S, 5.8S and 5S).

Its subcellular location is the cytoplasm. Its function is as follows. Component of the ribosome, a large ribonucleoprotein complex responsible for the synthesis of proteins in the cell. The small ribosomal subunit (SSU) binds messenger RNAs (mRNAs) and translates the encoded message by selecting cognate aminoacyl-transfer RNA (tRNA) molecules. The large subunit (LSU) contains the ribosomal catalytic site termed the peptidyl transferase center (PTC), which catalyzes the formation of peptide bonds, thereby polymerizing the amino acids delivered by tRNAs into a polypeptide chain. The nascent polypeptides leave the ribosome through a tunnel in the LSU and interact with protein factors that function in enzymatic processing, targeting, and the membrane insertion of nascent chains at the exit of the ribosomal tunnel. This Candida albicans (strain SC5314 / ATCC MYA-2876) (Yeast) protein is Small ribosomal subunit protein uS17.